The sequence spans 672 residues: Transcriptional regulator Kaiso (672 aa).

Residues 1-103 (MESRKLISAT…RSDLLDELIK (103 aa)) are interaction with NCOR1. Residues 1–136 (MESRKLISAT…SGTAQDGNTE (136 aa)) form a self-association region. Residues 32–94 (CDVTVIVEDR…IYSSKIVRVR (63 aa)) form the BTB domain. Residues lysine 151 and lysine 153 each participate in a glycyl lysine isopeptide (Lys-Gly) (interchain with G-Cter in SUMO2) cross-link. Residue threonine 251 is modified to Phosphothreonine. The segment at 298–573 (LPNHMPSSIN…FMSSHIKSVH (276 aa)) is interaction with CBFA2T3. The interval 325–354 (KANEEEEEEIIDDDDDTISSSPDSAVSNTS) is disordered. Positions 328–341 (EEEEEEIIDDDDDT) are enriched in acidic residues. Glycyl lysine isopeptide (Lys-Gly) (interchain with G-Cter in SUMO2) cross-links involve residues lysine 390, lysine 407, lysine 414, lysine 449, lysine 465, lysine 474, and lysine 479. Residues 454–672 (EGEARLENEI…EFEFIIPESY (219 aa)) are interaction with CTNND1. The Nuclear localization signal signature appears at 471 to 480 (MANKRMKVKH). 3 C2H2-type zinc fingers span residues 494 to 516 (YICI…FNIH), 522 to 544 (YPCR…EIHH), and 550 to 573 (YQCL…KSVH). A required for DNA-binding region spans residues 514–638 (NIHSWEKKYP…TTTSTQNKPM (125 aa)). Glycyl lysine isopeptide (Lys-Gly) (interchain with G-Cter in SUMO2) cross-links involve residues lysine 539, lysine 570, lysine 582, lysine 611, and lysine 618. The interval 616–635 (GYKVDTGKEPPVGTTTSTQN) is disordered.

As to quaternary structure, self-associates. Interacts with CTNND2. Interacts with CTNND1, and this interaction inhibits binding to both methylated and non-methylated DNA. Interacts with NCOR1. Interacts with KPNA2/RCH1, which may mediate nuclear import of this protein. Interacts with CBFA2T3. In terms of tissue distribution, expressed in vascular endothelium.

Its subcellular location is the nucleus. The protein localises to the cytoplasm. Functionally, transcriptional regulator with bimodal DNA-binding specificity. Binds to methylated CpG dinucleotides in the consensus sequence 5'-CGCG-3' and also binds to the non-methylated consensus sequence 5'-CTGCNA-3' also known as the consensus kaiso binding site (KBS). Recruits the N-CoR repressor complex to promote histone deacetylation and the formation of repressive chromatin structures in target gene promoters. May contribute to the repression of target genes of the Wnt signaling pathway. May also activate transcription of a subset of target genes by the recruitment of CTNND2. Represses expression of MMP7 in conjunction with transcriptional corepressors CBFA2T3, CBFA2T2 and RUNX1T1. The sequence is that of Transcriptional regulator Kaiso (ZBTB33) from Homo sapiens (Human).